Here is an 874-residue protein sequence, read N- to C-terminus: Alanine--tRNA ligase (874 aa).

Histidine 562, histidine 566, cysteine 664, and histidine 668 together coordinate Zn(2+).

It belongs to the class-II aminoacyl-tRNA synthetase family. Zn(2+) is required as a cofactor.

It localises to the cytoplasm. It catalyses the reaction tRNA(Ala) + L-alanine + ATP = L-alanyl-tRNA(Ala) + AMP + diphosphate. In terms of biological role, catalyzes the attachment of alanine to tRNA(Ala) in a two-step reaction: alanine is first activated by ATP to form Ala-AMP and then transferred to the acceptor end of tRNA(Ala). Also edits incorrectly charged Ser-tRNA(Ala) and Gly-tRNA(Ala) via its editing domain. The sequence is that of Alanine--tRNA ligase from Neisseria gonorrhoeae (strain ATCC 700825 / FA 1090).